A 289-amino-acid chain; its full sequence is NAD(P)H-hydrate epimerase (289 aa).

One can recognise a YjeF N-terminal domain in the interval 71 to 277 (AQTIDNELMS…SIVEKYNLKV (207 aa)). Residue 122–126 (NNGGD) coordinates (6S)-NADPHX. K(+)-binding residues include Asn123 and Asp185. (6S)-NADPHX is bound by residues 189-195 (GFSFTGE) and Asp218. Ser221 contacts K(+).

It belongs to the NnrE/AIBP family. K(+) serves as cofactor.

It catalyses the reaction (6R)-NADHX = (6S)-NADHX. The enzyme catalyses (6R)-NADPHX = (6S)-NADPHX. In terms of biological role, catalyzes the epimerization of the S- and R-forms of NAD(P)HX, a damaged form of NAD(P)H that is a result of enzymatic or heat-dependent hydration. This is a prerequisite for the S-specific NAD(P)H-hydrate dehydratase to allow the repair of both epimers of NAD(P)HX. The protein is NAD(P)H-hydrate epimerase of Plasmodium vivax (strain Salvador I).